A 309-amino-acid polypeptide reads, in one-letter code: Cytochrome c1, heme protein, mitochondrial (309 aa).

A mitochondrion-targeting transit peptide spans 1–61; that stretch reads MFSNLSKRWA…LYADSLTAEA (61 aa). At 62 to 262 the chain is on the mitochondrial intermembrane side; the sequence is MTAAEHGLHA…TFLNWCAEPE (201 aa). Positions 88 to 241 constitute a Cytochrome c domain; that stretch reads ASIRRGYQVY…DMVEYEDGTP (154 aa). Heme c contacts are provided by Cys-101, Cys-104, and His-105. Positions 131–140 are enriched in acidic residues; the sequence is EFEYDDEPDE. The segment at 131 to 168 is disordered; that stretch reads EFEYDDEPDEQGNPKKRPGKLSDYIPGPYPNEQAARAA. Met-225 contributes to the heme c binding site. The helical transmembrane segment at 263-296 threads the bilayer; the sequence is HDERKRLGLKTVIILSSLYLLSIWVKKFKWAGIK. The Mitochondrial matrix portion of the chain corresponds to 297–309; sequence TRKFVFNPPKPRK.

It belongs to the cytochrome c family. As to quaternary structure, component of the ubiquinol-cytochrome c oxidoreductase (cytochrome b-c1 complex, complex III, CIII), a multisubunit enzyme composed of 10 subunits. The complex is composed of 3 respiratory subunits cytochrome b (COB), cytochrome c1 (CYT1) and Rieske protein (RIP1), 2 core protein subunits COR1 and QCR2, and 5 low-molecular weight protein subunits QCR6, QCR7, QCR8, QCR9 and QCR10. The complex exists as an obligatory dimer and forms supercomplexes (SCs) in the inner mitochondrial membrane with a monomer or a dimer of cytochrome c oxidase (complex IV, CIV), resulting in 2 different assemblies (supercomplexes III(2)IV and III(2)IV(2)). CYT1 interacts with COX5A at the CIII-CIV interface. Requires heme c as cofactor.

It is found in the mitochondrion inner membrane. The catalysed reaction is a quinol + 2 Fe(III)-[cytochrome c](out) = a quinone + 2 Fe(II)-[cytochrome c](out) + 2 H(+)(out). Functionally, component of the ubiquinol-cytochrome c oxidoreductase, a multisubunit transmembrane complex that is part of the mitochondrial electron transport chain which drives oxidative phosphorylation. The respiratory chain contains 3 multisubunit complexes succinate dehydrogenase (complex II, CII), ubiquinol-cytochrome c oxidoreductase (cytochrome b-c1 complex, complex III, CIII) and cytochrome c oxidase (complex IV, CIV), that cooperate to transfer electrons derived from NADH and succinate to molecular oxygen, creating an electrochemical gradient over the inner membrane that drives transmembrane transport and the ATP synthase. The cytochrome b-c1 complex catalyzes electron transfer from ubiquinol to cytochrome c, linking this redox reaction to translocation of protons across the mitochondrial inner membrane, with protons being carried across the membrane as hydrogens on the quinol. In the process called Q cycle, 2 protons are consumed from the matrix, 4 protons are released into the intermembrane space and 2 electrons are passed to cytochrome c. Cytochrome c1 is a catalytic core subunit containing a c-type heme. It transfers electrons from the [2Fe-2S] iron-sulfur cluster of the Rieske protein to cytochrome c. The polypeptide is Cytochrome c1, heme protein, mitochondrial (CYT1) (Saccharomyces cerevisiae (strain ATCC 204508 / S288c) (Baker's yeast)).